The chain runs to 965 residues: Pullulanase 1, chloroplastic (965 aa).

A chloroplast-targeting transit peptide spans 1 to 62 (MALTLTPTSS…SKTSLHCLCS (62 aa)). Asp552 serves as the catalytic Nucleophile. Residue Glu589 is the Proton donor of the active site.

This sequence belongs to the glycosyl hydrolase 13 family.

The protein resides in the plastid. Its subcellular location is the chloroplast stroma. It catalyses the reaction Hydrolysis of (1-&gt;6)-alpha-D-glucosidic linkages in alpha- and beta-limit dextrins of amylopectin and glycogen, and in amylopectin and pullulan.. The protein operates within glycan biosynthesis; starch biosynthesis. It functions in the pathway glycan degradation; starch degradation. In terms of biological role, involved in starch degradation and also probably in the trimming of pre-amylopectin chains during starch synthesis. The chain is Pullulanase 1, chloroplastic (PU1) from Arabidopsis thaliana (Mouse-ear cress).